A 203-amino-acid chain; its full sequence is Small ribosomal subunit protein uS4 (203 aa).

The region spanning 93–156 is the S4 RNA-binding domain; that stretch reads RRLDNVVYRL…MKVPAILEAV (64 aa).

This sequence belongs to the universal ribosomal protein uS4 family. In terms of assembly, part of the 30S ribosomal subunit. Contacts protein S5. The interaction surface between S4 and S5 is involved in control of translational fidelity.

Its function is as follows. One of the primary rRNA binding proteins, it binds directly to 16S rRNA where it nucleates assembly of the body of the 30S subunit. In terms of biological role, with S5 and S12 plays an important role in translational accuracy. This chain is Small ribosomal subunit protein uS4, found in Streptococcus pyogenes serotype M49 (strain NZ131).